The following is a 190-amino-acid chain: Superoxide dismutase [Fe] (190 aa).

Residues histidine 27, histidine 75, aspartate 156, and histidine 160 each contribute to the Fe cation site.

It belongs to the iron/manganese superoxide dismutase family. In terms of assembly, homodimer. Fe cation is required as a cofactor.

It carries out the reaction 2 superoxide + 2 H(+) = H2O2 + O2. In terms of biological role, destroys superoxide anion radicals which are normally produced within the cells and which are toxic to biological systems. The polypeptide is Superoxide dismutase [Fe] (SODB) (Entamoeba histolytica (strain ATCC 30459 / HM-1:IMSS / ABRM)).